Here is a 157-residue protein sequence, read N- to C-terminus: MTPLARFRKVVVGGTFDRLHLGHQRLLSVALELGDRVVIGVTTDSFVREEGKKGVEPFEERVRAVRRFVEEKGASDRVEIVPLEDRYGTTLEDDEMDAIVVSPETEPVALEINELRRKRGFPPLSIVVIPFVLDGDGRKISSSRLRGEVDEGPCRDD.

Belongs to the eukaryotic CoaD family.

Its subcellular location is the cytoplasm. It carries out the reaction (R)-4'-phosphopantetheine + ATP + H(+) = 3'-dephospho-CoA + diphosphate. It participates in cofactor biosynthesis; coenzyme A biosynthesis. Reversibly transfers an adenylyl group from ATP to 4'-phosphopantetheine, yielding dephospho-CoA (dPCoA) and pyrophosphate. This Methanopyrus kandleri (strain AV19 / DSM 6324 / JCM 9639 / NBRC 100938) protein is Phosphopantetheine adenylyltransferase.